A 353-amino-acid polypeptide reads, in one-letter code: Protein-glutamate methylesterase/protein-glutamine glutaminase 4 (353 aa).

A Response regulatory domain is found at 7–124 (RILVAEDSPT…SPDFDADSRR (118 aa)). Asp-58 bears the 4-aspartylphosphate mark. The region spanning 158-350 (PVSPTRPGVV…SRLTSAFRGS (193 aa)) is the CheB-type methylesterase domain. Active-site residues include Ser-172, His-199, and Asp-292.

Belongs to the CheB family. In terms of processing, phosphorylated by CheA. Phosphorylation of the N-terminal regulatory domain activates the methylesterase activity.

Its subcellular location is the cytoplasm. The enzyme catalyses [protein]-L-glutamate 5-O-methyl ester + H2O = L-glutamyl-[protein] + methanol + H(+). The catalysed reaction is L-glutaminyl-[protein] + H2O = L-glutamyl-[protein] + NH4(+). In terms of biological role, involved in chemotaxis. Part of a chemotaxis signal transduction system that modulates chemotaxis in response to various stimuli. Catalyzes the demethylation of specific methylglutamate residues introduced into the chemoreceptors (methyl-accepting chemotaxis proteins or MCP) by CheR. Also mediates the irreversible deamidation of specific glutamine residues to glutamic acid. The polypeptide is Protein-glutamate methylesterase/protein-glutamine glutaminase 4 (Myxococcus xanthus (strain DK1622)).